The sequence spans 605 residues: Exo-beta-1,3-glucanase (605 aa).

The segment at 1–23 (MHVPPTDPARSAPPASPHRRRRP) is disordered. The signal sequence occupies residues 1–44 (MHVPPTDPARSAPPASPHRRRRPKALGLTALAAAMLMAVPTTQA). Substrate-binding positions include Gln-174, 194 to 196 (YGW), Gln-217, 446 to 449 (WRAD), and 480 to 481 (EH). Glu-502 (proton donor) is an active-site residue. Residue Tyr-505 participates in substrate binding.

It belongs to the glycosyl hydrolase 55 family.

It localises to the secreted. It catalyses the reaction Successive hydrolysis of beta-D-glucose units from the non-reducing ends of (1-&gt;3)-beta-D-glucans, releasing alpha-glucose.. Its function is as follows. Exo-beta-1,3-glucanase that specifically hydrolyzes laminarin and laminarioligosaccharides, producing glucose and laminaribiose as end products. This is Exo-beta-1,3-glucanase from Streptomyces sp. (strain SirexAA-E / ActE).